The following is a 218-amino-acid chain: Probable transaldolase (218 aa).

Lys87 (schiff-base intermediate with substrate) is an active-site residue.

Belongs to the transaldolase family. Type 3B subfamily.

The protein localises to the cytoplasm. The catalysed reaction is D-sedoheptulose 7-phosphate + D-glyceraldehyde 3-phosphate = D-erythrose 4-phosphate + beta-D-fructose 6-phosphate. The protein operates within carbohydrate degradation; pentose phosphate pathway; D-glyceraldehyde 3-phosphate and beta-D-fructose 6-phosphate from D-ribose 5-phosphate and D-xylulose 5-phosphate (non-oxidative stage): step 2/3. Its function is as follows. Transaldolase is important for the balance of metabolites in the pentose-phosphate pathway. The sequence is that of Probable transaldolase from Flavobacterium psychrophilum (strain ATCC 49511 / DSM 21280 / CIP 103535 / JIP02/86).